The primary structure comprises 429 residues: Palmitoyltransferase ZDHHC23 (429 aa).

The Cytoplasmic portion of the chain corresponds to 1–81 (MKPVKKKKTE…RIPWLRGAKK (81 aa)). A helical membrane pass occupies residues 82–102 (VNISILPPLVLLPVLLRVASW). Residue histidine 103 is a topological domain, lumenal. A helical membrane pass occupies residues 104-124 (FLLGVVVLTSLPMLALWYYYL). Residues 125–130 (THRRKE) lie on the Cytoplasmic side of the membrane. Residues 131 to 151 (QTLFFLSLGLFSLGYMYYVFL) traverse the membrane as a helical segment. At 152 to 159 (QEVVPQGH) the chain is on the lumenal side. Residues 160 to 180 (VGPAQLALLTCGLFLILVALY) form a helical membrane-spanning segment. Residues 181-296 (RAKKNPGYLS…NSCVGESNHQ (116 aa)) are Cytoplasmic-facing. Residues 212-247 (QEKTKGFPGTDTSGSLNNRTLKDDAKGSSRVGLDSP) are disordered. Residues 221 to 230 (TDTSGSLNNR) show a composition bias toward polar residues. The DHHC domain occupies 253–303 (DWCAKCQLVRPARAWHCRICGICVRRMDHHCVWINSCVGESNHQAFILALS). Cysteine 283 acts as the S-palmitoyl cysteine intermediate in catalysis. The chain crosses the membrane as a helical span at residues 297 to 317 (AFILALSIFLLTSVYGISLTL). Residues 318 to 347 (NTICRDRSLFTALFYCPGVYANYSSALSFT) lie on the Lumenal side of the membrane. A helical membrane pass occupies residues 348–368 (CVWYSVIITAGMAYIFLIQLI). Over 369–429 (NISYNVTERE…TVHTPAEDIV (61 aa)) the chain is Cytoplasmic. Residues 426 to 429 (EDIV) are interaction with NOS1.

The protein belongs to the DHHC palmitoyltransferase family. Interacts with NOS1. In terms of tissue distribution, expressed in the brain (at protein level), with highest levels in olfactory bulb, piriform cortex and hippocampus.

It is found in the golgi apparatus membrane. The protein resides in the golgi apparatus. It localises to the trans-Golgi network membrane. The enzyme catalyses L-cysteinyl-[protein] + hexadecanoyl-CoA = S-hexadecanoyl-L-cysteinyl-[protein] + CoA. In terms of biological role, palmitoyltransferase that could catalyze the addition of palmitate onto various protein substrates and be involved in a variety of cellular processes. Palmitoyltransferase that mediates palmitoylation of KCNMA1, regulating localization of KCNMA1 to the plasma membrane. May be involved in NOS1 regulation and targeting to the synaptic membrane. In Rattus norvegicus (Rat), this protein is Palmitoyltransferase ZDHHC23.